The chain runs to 404 residues: Putative Peroxidase 48 (404 aa).

An N-terminal signal peptide occupies residues Met-1–Ala-18. 4 cysteine pairs are disulfide-bonded: Cys-77–Cys-156, Cys-110–Cys-115, Cys-162–Cys-397, and Cys-241–Cys-273. His-108 serves as the catalytic Proton acceptor. Asp-109, Ile-112, Gly-114, Asp-116, and Ser-118 together coordinate Ca(2+). Residue Asn-136 is glycosylated (N-linked (GlcNAc...) asparagine). Pro-204 contacts substrate. His-234 lines the heme b pocket. A Ca(2+)-binding site is contributed by Ser-235. N-linked (GlcNAc...) asparagine glycosylation occurs at Asn-250. Residues Ser-276–Ser-307 form a disordered region. The segment covering Ser-283–Leu-294 has biased composition (pro residues). Ca(2+) is bound at residue Asp-287. The segment covering Ala-296–Ser-307 has biased composition (polar residues).

This sequence belongs to the peroxidase family. Classical plant (class III) peroxidase subfamily. Requires heme b as cofactor. The cofactor is Ca(2+).

Its subcellular location is the secreted. It carries out the reaction 2 a phenolic donor + H2O2 = 2 a phenolic radical donor + 2 H2O. In terms of biological role, removal of H(2)O(2), oxidation of toxic reductants, biosynthesis and degradation of lignin, suberization, auxin catabolism, response to environmental stresses such as wounding, pathogen attack and oxidative stress. These functions might be dependent on each isozyme/isoform in each plant tissue. This Arabidopsis thaliana (Mouse-ear cress) protein is Putative Peroxidase 48 (PER48).